The chain runs to 289 residues: Protein SET (289 aa).

The disordered stretch occupies residues 1–42; the sequence is MAPKRQSAILPQPKKPRPVAAPKLEDKSASPGLPKGEKEQQE. Ala2 is subject to N,N,N-trimethylalanine. A Phosphoserine modification is found at Ser7. Pro11 carries the N6-acetyllysine modification. A Phosphoserine modification is found at Lys15. Lys23 carries the post-translational modification N6-acetyllysine. A phosphoserine mark is found at Leu24, Ser28, and Ser62. The segment at 31–77 is dimerization; the sequence is PGLPKGEKEQQEAIEHIDEVQNEIDRLNEQASEEILKVEQKYNKLRQ. At Lys67 the chain carries N6-acetyllysine. Residues 78-224 are earmuff domain; it reads PFFQKRSELI…ELGEVIKDDI (147 aa). Tyr145 is subject to Phosphotyrosine. Lys149 is modified (N6-acetyllysine). Residue Lys153 forms a Glycyl lysine isopeptide (Lys-Gly) (interchain with G-Cter in ubiquitin) linkage. Disordered stretches follow at residues 157–206 and 235–289; these read LNES…TWFT and PDMD…GEDD. Over residues 168-180 the composition is skewed to basic and acidic residues; that stretch reads TEIKWKSGKDLTK. Lys171 bears the N6-acetyllysine mark. Acidic residues predominate over residues 236-289; that stretch reads DMDDEEGEAEDDDDDDEEEEGLEDIDEEGDEDEGEEDDDEDEGEEGEEDEGEDD.

This sequence belongs to the nucleosome assembly protein (NAP) family. In terms of assembly, headphone-shaped homodimer. Isoform 1 and isoform 2 interact directly with each other and with ANP32A within the tripartite INHAT (inhibitor of acetyltransferases) complex. Isoform 1 and isoform 2 interact also with histones. Isoform 2 is a omponent of the SET complex, composed of at least ANP32A, APEX1, HMGB2, NME1, SET and TREX1, but not NME2 or TREX2. Within this complex, directly interacts with ANP32A, NME1, HMGB2 and TREX1; the interaction with ANP32A is enhanced after cleavage. Interacts with APBB1, CHTOP, SETBP1, SGO1. In terms of processing, isoform 2 is phosphorylated on Ser-15 and Ser-24. Post-translationally, isoform 2 is acetylated on Lys-11. Some glutamate residues are glycylated by TTLL8. This modification occurs exclusively on glutamate residues and results in a glycine chain on the gamma-carboxyl group. In terms of processing, N-terminus of isoform 1 is methylated by METTL11A/NTM1. Mainly trimethylated. Post-translationally, cleaved after Lys-176 by GZMA. The cleavage inhibits its nucleosome assembly activity and disrupts the inhibition on NME1. In terms of tissue distribution, widely expressed, with higher expression in brain, thymus, spleen and bone marrow, and lower expression in heart, liver and muscle.

It is found in the cytoplasm. The protein resides in the cytosol. The protein localises to the endoplasmic reticulum. It localises to the nucleus. Its subcellular location is the nucleoplasm. Functionally, multitasking protein, involved in apoptosis, transcription, nucleosome assembly and histone chaperoning. Isoform 2 anti-apoptotic activity is mediated by inhibition of the GZMA-activated DNase, NME1. In the course of cytotoxic T-lymphocyte (CTL)-induced apoptosis, GZMA cleaves SET, disrupting its binding to NME1 and releasing NME1 inhibition. Isoform 1 and isoform 2 are potent inhibitors of protein phosphatase 2A. Isoform 1 and isoform 2 inhibit EP300/CREBBP and PCAF-mediated acetylation of histones (HAT) and nucleosomes, most probably by masking the accessibility of lysines of histones to the acetylases. The predominant target for inhibition is histone H4. HAT inhibition leads to silencing of HAT-dependent transcription and prevents active demethylation of DNA. Both isoforms stimulate DNA replication of the adenovirus genome complexed with viral core proteins; however, isoform 2 specific activity is higher. This is Protein SET (Set) from Rattus norvegicus (Rat).